A 209-amino-acid polypeptide reads, in one-letter code: Probable chalcone--flavanone isomerase 3 (209 aa).

It belongs to the chalcone isomerase family.

It catalyses the reaction a chalcone = a flavanone.. It functions in the pathway secondary metabolite biosynthesis; flavonoid biosynthesis. Functionally, involved in anthocyanin biosynthesis. In Arabidopsis thaliana (Mouse-ear cress), this protein is Probable chalcone--flavanone isomerase 3 (CHI3).